A 357-amino-acid polypeptide reads, in one-letter code: Eukaryotic translation initiation factor 3 subunit H (357 aa).

One can recognise an MPN domain in the interval 20–162 (VELESLLVMN…MRAYQLTPEF (143 aa)).

This sequence belongs to the eIF-3 subunit H family. In terms of assembly, component of the eukaryotic translation initiation factor 3 (eIF-3) complex. The eIF-3 complex appears to include tif32/eif3a, SPAC25G10.08/eif3b, tif33/eif3c, SPBC4C3.07/eif3f, tif35/eif3g and sum1/eif3i. This set of common subunits may also associate exclusively with either moe1/eif3d and int6/eif3e, or with SPAC821.05/eif3h and SPAC1751.03/eif3m. The eIF-3 complex may also include SPAC3A12.13c/eif3j.

It localises to the cytoplasm. The protein resides in the nucleus. Its function is as follows. Component of the eukaryotic translation initiation factor 3 (eIF-3) complex, which is involved in protein synthesis of a specialized repertoire of mRNAs and, together with other initiation factors, stimulates binding of mRNA and methionyl-tRNAi to the 40S ribosome. The eIF-3 complex specifically targets and initiates translation of a subset of mRNAs involved in cell proliferation. The polypeptide is Eukaryotic translation initiation factor 3 subunit H (eif3h) (Schizosaccharomyces pombe (strain 972 / ATCC 24843) (Fission yeast)).